Here is a 168-residue protein sequence, read N- to C-terminus: Peptide methionine sulfoxide reductase MsrA 2 (168 aa).

The active site involves Cys11.

Belongs to the MsrA Met sulfoxide reductase family.

The enzyme catalyses L-methionyl-[protein] + [thioredoxin]-disulfide + H2O = L-methionyl-(S)-S-oxide-[protein] + [thioredoxin]-dithiol. It carries out the reaction [thioredoxin]-disulfide + L-methionine + H2O = L-methionine (S)-S-oxide + [thioredoxin]-dithiol. In terms of biological role, has an important function as a repair enzyme for proteins that have been inactivated by oxidation. Catalyzes the reversible oxidation-reduction of methionine sulfoxide in proteins to methionine. The polypeptide is Peptide methionine sulfoxide reductase MsrA 2 (Rhodopirellula baltica (strain DSM 10527 / NCIMB 13988 / SH1)).